The primary structure comprises 131 residues: MRHRHGLRKLNRTSSHRLAMLRNMSNSLIEHEVIKTTLPKAKELRKVVEPLITLGKKPSLANRRLAFNRLRDRDSVAKLFDVLGPRFANRPGGYLRILKFGFRVGDNAPMALVELLDRPEVDETENVQEAE.

This sequence belongs to the bacterial ribosomal protein bL17 family. As to quaternary structure, part of the 50S ribosomal subunit. Contacts protein L32.

This chain is Large ribosomal subunit protein bL17, found in Burkholderia multivorans (strain ATCC 17616 / 249).